The primary structure comprises 317 residues: tRNA dimethylallyltransferase (317 aa).

14 to 21 (GPTASGKS) serves as a coordination point for ATP. Residue 16-21 (TASGKS) coordinates substrate. 2 interaction with substrate tRNA regions span residues 39–42 (DSVL) and 163–167 (QRIQR).

Belongs to the IPP transferase family. As to quaternary structure, monomer. Mg(2+) is required as a cofactor.

The catalysed reaction is adenosine(37) in tRNA + dimethylallyl diphosphate = N(6)-dimethylallyladenosine(37) in tRNA + diphosphate. In terms of biological role, catalyzes the transfer of a dimethylallyl group onto the adenine at position 37 in tRNAs that read codons beginning with uridine, leading to the formation of N6-(dimethylallyl)adenosine (i(6)A). This Xylella fastidiosa (strain M23) protein is tRNA dimethylallyltransferase.